A 1488-amino-acid polypeptide reads, in one-letter code: Chromosome partition protein MukB (1488 aa).

Residue 34–41 participates in ATP binding; the sequence is GGNGAGKS. Coiled-coil stretches lie at residues 326-418, 444-472, and 509-602; these read LEAD…QYNQ, LDTF…QTAH, and RHLA…QRAP. Residues 666–783 form a flexible hinge region; it reads PGGAEDQRLN…SLPIFGRAAR (118 aa). Coiled coils occupy residues 835–923, 977–1116, and 1209–1265; these read EAEI…AKLE, EMLS…AKAG, and VEAI…LQSV.

The protein belongs to the SMC family. MukB subfamily. Homodimerization via its hinge domain. Binds to DNA via its C-terminal region. Interacts, and probably forms a ternary complex, with MukE and MukF via its C-terminal region. The complex formation is stimulated by calcium or magnesium. Interacts with tubulin-related protein FtsZ.

The protein resides in the cytoplasm. It localises to the nucleoid. Functionally, plays a central role in chromosome condensation, segregation and cell cycle progression. Functions as a homodimer, which is essential for chromosome partition. Involved in negative DNA supercoiling in vivo, and by this means organize and compact chromosomes. May achieve or facilitate chromosome segregation by condensation DNA from both sides of a centrally located replisome during cell division. This is Chromosome partition protein MukB from Salmonella paratyphi B (strain ATCC BAA-1250 / SPB7).